Here is a 380-residue protein sequence, read N- to C-terminus: Flap endonuclease 1 (380 aa).

Residues 1–104 form an N-domain region; the sequence is MGIQGLAKLI…GELAKRSERR (104 aa). The residue at position 19 (arginine 19) is a Symmetric dimethylarginine; by PRMT5. Position 34 (aspartate 34) interacts with Mg(2+). 2 residues coordinate DNA: arginine 47 and arginine 70. Lysine 80 is modified (N6-acetyllysine). Aspartate 86 serves as a coordination point for Mg(2+). Residues arginine 100 and arginine 104 each carry the symmetric dimethylarginine; by PRMT5 modification. The tract at residues 122-253 is I-domain; it reads EVEKFTKRLV…KRAVDLIQKH (132 aa). Mg(2+) is bound by residues glutamate 158, glutamate 160, aspartate 179, and aspartate 181. Glutamate 158 serves as a coordination point for DNA. Serine 187 bears the Phosphoserine; by CDK2 mark. Arginine 192 carries the symmetric dimethylarginine; by PRMT5 modification. Serine 197 carries the post-translational modification Phosphoserine. The DNA site is built by glycine 231 and aspartate 233. Position 233 (aspartate 233) interacts with Mg(2+). Phosphoserine is present on residues serine 255, serine 293, and serine 335. The interval 327-380 is disordered; that stretch reads RLSKSRQGSTQGRLDDFFKVTGSLSSAKRKEPEPKGSTKKKAKTGAAGKFKRGK. At threonine 336 the chain carries Phosphothreonine. The segment at 336–344 is interaction with PCNA; that stretch reads TQGRLDDFF. At lysine 354 the chain carries N6-acetyllysine. Positions 363 to 380 are enriched in basic residues; sequence STKKKAKTGAAGKFKRGK. Position 364 is a phosphothreonine (threonine 364). Lysine 375, lysine 377, and lysine 380 each carry N6-acetyllysine.

Belongs to the XPG/RAD2 endonuclease family. FEN1 subfamily. In terms of assembly, interacts with PCNA. Three molecules of FEN1 bind to one PCNA trimer with each molecule binding to one PCNA monomer. PCNA stimulates the nuclease activity without altering cleavage specificity. The C-terminal domain binds EP300; can bind simultaneously to both PCNA and EP300. Interacts with DDX11; this interaction is direct and increases flap endonuclease activity of FEN1. Interacts with WDR4; regulating its endonuclease activity. Interacts with POLB. It depends on Mg(2+) as a cofactor. Post-translationally, acetylated by EP300. Acetylation inhibits both endonuclease and exonuclease activity. Acetylation also reduces DNA-binding activity but does not affect interaction with PCNA or EP300. Phosphorylation upon DNA damage induces relocalization to the nuclear plasma. Phosphorylation at Ser-187 by CDK2 occurs during late S-phase and results in dissociation from PCNA. In terms of processing, methylation at Arg-192 by PRMT5 impedes Ser-187 phosphorylation and increases interaction with PCNA.

It is found in the nucleus. It localises to the nucleolus. The protein localises to the nucleoplasm. The protein resides in the mitochondrion. Its function is as follows. Structure-specific nuclease with 5'-flap endonuclease and 5'-3' exonuclease activities involved in DNA replication and repair. During DNA replication, cleaves the 5'-overhanging flap structure that is generated by displacement synthesis when DNA polymerase encounters the 5'-end of a downstream Okazaki fragment. It enters the flap from the 5'-end and then tracks to cleave the flap base, leaving a nick for ligation. Also involved in the long patch base excision repair (LP-BER) pathway, by cleaving within the apurinic/apyrimidinic (AP) site-terminated flap. Acts as a genome stabilization factor that prevents flaps from equilibrating into structures that lead to duplications and deletions. Also possesses 5'-3' exonuclease activity on nicked or gapped double-stranded DNA, and exhibits RNase H activity. Also involved in replication and repair of rDNA and in repairing mitochondrial DNA. This is Flap endonuclease 1 from Macaca fascicularis (Crab-eating macaque).